The primary structure comprises 512 residues: Ribose import ATP-binding protein RbsA 2 (512 aa).

ABC transporter domains are found at residues 22–258 (LEMR…VGRD) and 263–512 (FPKV…TGNA). Position 54-61 (54-61 (GENGAGKS)) interacts with ATP.

This sequence belongs to the ABC transporter superfamily. Ribose importer (TC 3.A.1.2.1) family. In terms of assembly, the complex is composed of an ATP-binding protein (RbsA), two transmembrane proteins (RbsC) and a solute-binding protein (RbsB).

The protein resides in the cell inner membrane. The catalysed reaction is D-ribose(out) + ATP + H2O = D-ribose(in) + ADP + phosphate + H(+). Part of the ABC transporter complex RbsABC involved in ribose import. Responsible for energy coupling to the transport system. The protein is Ribose import ATP-binding protein RbsA 2 of Rhizobium johnstonii (strain DSM 114642 / LMG 32736 / 3841) (Rhizobium leguminosarum bv. viciae).